A 69-amino-acid chain; its full sequence is FXYD domain-containing ion transport regulator 11 (69 aa).

Residues 1-22 (MSQLTELVLLTVFLALFSRAEA) form the signal peptide. Topologically, residues 23 to 33 (NPFVYNYEALR) are extracellular. Residues 34-54 (IGGLVFTCVLVAGAVTALCWG) traverse the membrane as a helical segment. Topologically, residues 55 to 69 (QCKPKRKHDDDASKI) are cytoplasmic.

It belongs to the FXYD family. Detected in adult gill and in larval skin at 2 days post-fertilization (at protein level). In adult gill, strong expression is found in the basal regions of the secondary lamellae.

Its subcellular location is the cell membrane. In terms of biological role, may modulate the activity of a sodium/potassium-transporting ATPase. This is FXYD domain-containing ion transport regulator 11 from Danio rerio (Zebrafish).